Reading from the N-terminus, the 150-residue chain is MAQLLMVTVTLGCISLLYLLPGTLSGSLGKGLRHSRPREPPAKIPSSNLQPGHPSLQPVVWKSRRHAPQPQGRGNRALAMVHLPQGGGSRHPGPQRPTGSRRPHAQLLRVGCVLGTCQVQNLSHRLWQLVRPAGRRDSAPVDPSSPHSYG.

The N-terminal stretch at 1–25 (MAQLLMVTVTLGCISLLYLLPGTLS) is a signal peptide. Positions 26–100 (GSLGKGLRHS…HPGPQRPTGS (75 aa)) are excised as a propeptide. Residues 28 to 102 (LGKGLRHSRP…GPQRPTGSRR (75 aa)) form a disordered region. A disulfide bond links Cys-112 and Cys-117. Tyr-149 is modified (tyrosine amide).

Belongs to the adrenomedullin family. As to expression, high expression detected in the submaxillary gland, kidney, stomach, and mesentery, followed by the pituitary, lung, pancreas, intestines, spleen, thymus and ovary. Expressed mainly in the intermediate lobe of the pituitary, with sporadic in the anterior lobe.

It is found in the secreted. In terms of biological role, intermedin/ADM2 is a peptide hormone that plays a role as physiological regulator of gastrointestinal and cardiovascular bioactivities mediated by the CALCRL-RAMPs receptor complexes. Activates the cAMP-dependent pathway through interaction with CALCRL-RAMP3 receptor complex. The protein is Protein ADM2 of Mus musculus (Mouse).